A 391-amino-acid polypeptide reads, in one-letter code: MLTGITRLFSRVQKLDPRCFLHMSVQATQNSQVPAERPRTVSRTSDSDPAKHGEQHEGQHYSIPLQDLKTVFPHGLPPRYMMQVKTFGEACLMVRKPALELLGYLKNTNFAHPAVRYLLYGEKGTGKTLSLCHAVHFCARHDWLILHIPDAHLWVKNCRELLQSTHNKQRFDQPLEASTWLKNFKTTNERFLSQIKVQEKYVWNKRESTEKGSPLGEVVEQGLTRVRNATDAVGVVLKELKAQSALGLFHLLVAVDGVNALWGRTTLKKEDRTLIAPEELSLVHNLRKMVKNDWHGGAIVLSLSQTGSLFKSRTAYLPHELLGKEGFNALEPFLPILIPNYNPKEFESSFQYYLENNWLQHEKASTEEGRKELRFLSNCNPEQLERLCASL.

The transit peptide at 1 to 17 directs the protein to the mitochondrion; sequence MLTGITRLFSRVQKLDP. The interval 30–59 is disordered; the sequence is NSQVPAERPRTVSRTSDSDPAKHGEQHEGQ. The segment covering 45-59 has biased composition (basic and acidic residues); sequence SDSDPAKHGEQHEGQ. K168 and K200 each carry N6-acetyllysine.

Belongs to the mitochondrion-specific ribosomal protein mS29 family. In terms of assembly, component of the mitochondrial ribosome small subunit (28S) which comprises a 12S rRNA and about 30 distinct proteins. Interacts with DELE1. Interacts with NOA1.

The protein resides in the mitochondrion. It carries out the reaction GTP + H2O = GDP + phosphate + H(+). Functionally, as a component of the mitochondrial small ribosomal subunit, it plays a role in the translation of mitochondrial mRNAs. Involved in mediating interferon-gamma-induced cell death. Displays GTPase activity in vitro. This Mus musculus (Mouse) protein is Small ribosomal subunit protein mS29.